A 96-amino-acid chain; its full sequence is Small ribosomal subunit protein uS19 (96 aa).

Residues 1–30 are disordered; that stretch reads MARSIKKGPFADKHLTKKVEDANKGNKKSV. A compositionally biased stretch (basic and acidic residues) spans 9–24; sequence PFADKHLTKKVEDANK.

It belongs to the universal ribosomal protein uS19 family.

Protein S19 forms a complex with S13 that binds strongly to the 16S ribosomal RNA. In Anaeromyxobacter sp. (strain Fw109-5), this protein is Small ribosomal subunit protein uS19.